Here is a 217-residue protein sequence, read N- to C-terminus: 4-hydroxy-tetrahydrodipicolinate reductase (217 aa).

Residues 7 to 12 (GFKGKM), 71 to 73 (GTT), and 95 to 98 (SYNF) contribute to the NAD(+) site. The active-site Proton donor/acceptor is the H127. (S)-2,3,4,5-tetrahydrodipicolinate is bound at residue H128. K131 serves as the catalytic Proton donor. 137 to 138 (GT) provides a ligand contact to (S)-2,3,4,5-tetrahydrodipicolinate.

This sequence belongs to the DapB family.

The protein localises to the cytoplasm. It catalyses the reaction (S)-2,3,4,5-tetrahydrodipicolinate + NAD(+) + H2O = (2S,4S)-4-hydroxy-2,3,4,5-tetrahydrodipicolinate + NADH + H(+). It carries out the reaction (S)-2,3,4,5-tetrahydrodipicolinate + NADP(+) + H2O = (2S,4S)-4-hydroxy-2,3,4,5-tetrahydrodipicolinate + NADPH + H(+). It participates in amino-acid biosynthesis; L-lysine biosynthesis via DAP pathway; (S)-tetrahydrodipicolinate from L-aspartate: step 4/4. Catalyzes the conversion of 4-hydroxy-tetrahydrodipicolinate (HTPA) to tetrahydrodipicolinate. This chain is 4-hydroxy-tetrahydrodipicolinate reductase, found in Thermosipho africanus (strain TCF52B).